A 182-amino-acid chain; its full sequence is Ribosome maturation factor RimM (182 aa).

Positions 103 to 182 (EDDYYWKDLM…RVEVDWDPGF (80 aa)) constitute a PRC barrel domain.

Belongs to the RimM family. As to quaternary structure, binds ribosomal protein uS19.

It localises to the cytoplasm. In terms of biological role, an accessory protein needed during the final step in the assembly of 30S ribosomal subunit, possibly for assembly of the head region. Essential for efficient processing of 16S rRNA. May be needed both before and after RbfA during the maturation of 16S rRNA. It has affinity for free ribosomal 30S subunits but not for 70S ribosomes. This Yersinia pestis bv. Antiqua (strain Antiqua) protein is Ribosome maturation factor RimM.